The following is a 426-amino-acid chain: Histidine--tRNA ligase (426 aa).

This sequence belongs to the class-II aminoacyl-tRNA synthetase family. As to quaternary structure, homodimer.

Its subcellular location is the cytoplasm. The enzyme catalyses tRNA(His) + L-histidine + ATP = L-histidyl-tRNA(His) + AMP + diphosphate + H(+). The protein is Histidine--tRNA ligase of Malacoplasma penetrans (strain HF-2) (Mycoplasma penetrans).